Here is a 153-residue protein sequence, read N- to C-terminus: Arginine regulator (153 aa).

The protein belongs to the ArgR family.

Its subcellular location is the cytoplasm. The protein operates within amino-acid degradation; L-arginine degradation via ADI pathway. In terms of biological role, regulates the transcription of the arc operon, involved in arginine catabolism. This Lactiplantibacillus plantarum (strain ATCC BAA-793 / NCIMB 8826 / WCFS1) (Lactobacillus plantarum) protein is Arginine regulator (argR1).